Here is a 511-residue protein sequence, read N- to C-terminus: Maturase K (511 aa).

Belongs to the intron maturase 2 family. MatK subfamily.

It is found in the plastid. It localises to the chloroplast. Usually encoded in the trnK tRNA gene intron. Probably assists in splicing its own and other chloroplast group II introns. The sequence is that of Maturase K from Adesmia lanata.